The primary structure comprises 316 residues: UPF0725 protein At1g02770 (316 aa).

The protein belongs to the UPF0725 (EMB2204) family.

This Arabidopsis thaliana (Mouse-ear cress) protein is UPF0725 protein At1g02770.